Here is a 194-residue protein sequence, read N- to C-terminus: 7-methyl-GTP pyrophosphatase (194 aa).

Asp-69 functions as the Proton acceptor in the catalytic mechanism.

Belongs to the Maf family. YceF subfamily. It depends on a divalent metal cation as a cofactor.

It localises to the cytoplasm. It catalyses the reaction N(7)-methyl-GTP + H2O = N(7)-methyl-GMP + diphosphate + H(+). Its function is as follows. Nucleoside triphosphate pyrophosphatase that hydrolyzes 7-methyl-GTP (m(7)GTP). May have a dual role in cell division arrest and in preventing the incorporation of modified nucleotides into cellular nucleic acids. In Salmonella choleraesuis (strain SC-B67), this protein is 7-methyl-GTP pyrophosphatase (yceF1).